The sequence spans 421 residues: Histidine--tRNA ligase (421 aa).

This sequence belongs to the class-II aminoacyl-tRNA synthetase family. As to quaternary structure, homodimer.

It is found in the cytoplasm. The catalysed reaction is tRNA(His) + L-histidine + ATP = L-histidyl-tRNA(His) + AMP + diphosphate + H(+). The chain is Histidine--tRNA ligase from Francisella tularensis subsp. tularensis (strain SCHU S4 / Schu 4).